We begin with the raw amino-acid sequence, 333 residues long: UPF0284 protein VNG_1572C (333 aa).

Belongs to the UPF0284 family.

The chain is UPF0284 protein VNG_1572C from Halobacterium salinarum (strain ATCC 700922 / JCM 11081 / NRC-1) (Halobacterium halobium).